Here is a 215-residue protein sequence, read N- to C-terminus: Ribonuclease T (215 aa).

Positions 20–194 constitute an Exonuclease domain; the sequence is VVIDVETAGF…YDTERTAVLF (175 aa). Mg(2+)-binding residues include Asp-23, Glu-25, His-181, and Asp-186. His-181 functions as the Proton donor/acceptor in the catalytic mechanism.

It belongs to the RNase T family. Homodimer. Requires Mg(2+) as cofactor.

Trims short 3' overhangs of a variety of RNA species, leaving a one or two nucleotide 3' overhang. Responsible for the end-turnover of tRNA: specifically removes the terminal AMP residue from uncharged tRNA (tRNA-C-C-A). Also appears to be involved in tRNA biosynthesis. The protein is Ribonuclease T of Salmonella paratyphi A (strain ATCC 9150 / SARB42).